Reading from the N-terminus, the 274-residue chain is Exosome complex component RRP40 (274 aa).

At Ala2 the chain carries N-acetylalanine. A Glycyl lysine isopeptide (Lys-Gly) (interchain with G-Cter in SUMO2) cross-link involves residue Lys150.

It belongs to the RRP40 family. As to quaternary structure, component of the RNA exosome core complex (Exo-9), composed of EXOSC1, EXOSC2, EXOSC3, EXOSC4, EXOSC5, EXOSC6, EXOSC7, EXOSC8 and EXOSC9; within the complex interacts with EXOSC5 and EXOSC9. The catalytically inactive RNA exosome core complex (Exo-9) associates with the catalytic subunit EXOSC10/RRP6. Exo-9 may associate with DIS3 to form the nucleolar exosome complex, or DIS3L to form the cytoplasmic exosome complex. Exo-9 is formed by a hexameric base ring consisting of the heterodimers EXOSC4-EXOSC9, EXOSC5-EXOSC8 and EXOSC6-EXOSC7, and a cap ring consisting of EXOSC1, EXOSC2 and EXOSC3. The RNA exosome complex associates with cofactors C1D/RRP47, MPHOSPH6/MPP6 and MTREX/MTR4. Interacts with MPHOSPH6/MPP6; the interaction is direct. Interacts with GTPBP1. Interacts with ZC3HAV1. Interacts with DDX17 only in the presence of ZC3HAV1 in an RNA-independent manner. Interacts with DHX36; this interaction occurs in a RNase-insensitive manner. Interacts with HBS1L isoform 2.

It localises to the cytoplasm. It is found in the nucleus. Its subcellular location is the nucleolus. In terms of biological role, non-catalytic component of the RNA exosome complex which has 3'-&gt;5' exoribonuclease activity and participates in a multitude of cellular RNA processing and degradation events. In the nucleus, the RNA exosome complex is involved in proper maturation of stable RNA species such as rRNA, snRNA and snoRNA, in the elimination of RNA processing by-products and non-coding 'pervasive' transcripts, such as antisense RNA species and promoter-upstream transcripts (PROMPTs), and of mRNAs with processing defects, thereby limiting or excluding their export to the cytoplasm. The RNA exosome may be involved in Ig class switch recombination (CSR) and/or Ig variable region somatic hypermutation (SHM) by targeting AICDA deamination activity to transcribed dsDNA substrates. In the cytoplasm, the RNA exosome complex is involved in general mRNA turnover and specifically degrades inherently unstable mRNAs containing AU-rich elements (AREs) within their 3' untranslated regions, and in RNA surveillance pathways, preventing translation of aberrant mRNAs. It seems to be involved in degradation of histone mRNA. The catalytic inactive RNA exosome core complex of 9 subunits (Exo-9) is proposed to play a pivotal role in the binding and presentation of RNA for ribonucleolysis, and to serve as a scaffold for the association with catalytic subunits and accessory proteins or complexes. EXOSC3 as peripheral part of the Exo-9 complex stabilizes the hexameric ring of RNase PH-domain subunits through contacts with EXOSC9 and EXOSC5. The chain is Exosome complex component RRP40 (Exosc3) from Mus musculus (Mouse).